The following is a 585-amino-acid chain: Arginine--tRNA ligase (585 aa).

The 'HIGH' region motif lies at 131-141; the sequence is ANPTGPMHVGH.

This sequence belongs to the class-I aminoacyl-tRNA synthetase family. In terms of assembly, monomer.

The protein resides in the cytoplasm. The catalysed reaction is tRNA(Arg) + L-arginine + ATP = L-arginyl-tRNA(Arg) + AMP + diphosphate. In Allorhizobium ampelinum (strain ATCC BAA-846 / DSM 112012 / S4) (Agrobacterium vitis (strain S4)), this protein is Arginine--tRNA ligase.